Reading from the N-terminus, the 140-residue chain is 3-hydroxyacyl-[acyl-carrier-protein] dehydratase FabZ (140 aa).

The active site involves His-47.

The protein belongs to the thioester dehydratase family. FabZ subfamily.

Its subcellular location is the cytoplasm. It catalyses the reaction a (3R)-hydroxyacyl-[ACP] = a (2E)-enoyl-[ACP] + H2O. Its function is as follows. Involved in unsaturated fatty acids biosynthesis. Catalyzes the dehydration of short chain beta-hydroxyacyl-ACPs and long chain saturated and unsaturated beta-hydroxyacyl-ACPs. This Streptococcus pneumoniae (strain CGSP14) protein is 3-hydroxyacyl-[acyl-carrier-protein] dehydratase FabZ.